A 60-amino-acid chain; its full sequence is Mastoparan-VT5 (60 aa).

The signal sequence occupies residues M1 to A27. AXPX repeat units follow at residues A27–L30, A31–L34, A37–D40, and A41–E44. Positions D28–T45 are excised as a propeptide.

It belongs to the MCD family. Mastoparan subfamily. In terms of tissue distribution, expressed by the venom gland.

The protein localises to the secreted. Its function is as follows. The synthetic peptide shows weak antimicrobial activities against a few Gram-positive bacteria (only 2 on the 11 strains tested) and the fungus C.albicans. Does not show activity against all the Gram-negative bacteria tested. Exhibits little hemolytic activity against washed human erythrocytes. In Vespa tropica (Greater banded hornet), this protein is Mastoparan-VT5.